The primary structure comprises 87 residues: Spore morphogenesis and germination protein YwcE (87 aa).

3 helical membrane passes run 1-21 (MMDMFFAYLLVASATPLFIWL), 26-46 (VALSAIPPIILMWVFFFFYAT), and 56-76 (LMIILFAVNVIVAHIAAFIIY).

Belongs to the YwcE family.

It localises to the cell membrane. The protein localises to the spore membrane. The protein resides in the spore outer membrane. Required for proper spore morphogenesis. Important for spore germination. The protein is Spore morphogenesis and germination protein YwcE (ywcE) of Bacillus subtilis (strain 168).